The sequence spans 164 residues: Putative L,D-transpeptidase YkuD (164 aa).

The region spanning Leu2 to Ile45 is the LysM domain. A L,D-TPase catalytic domain is found at Tyr56–Asn163. The active-site Proton donor/acceptor is the His123. The active-site Nucleophile is the Cys139.

The protein belongs to the YkuD family. Monomer.

The protein resides in the spore wall. Its pathway is cell wall biogenesis; peptidoglycan biosynthesis. In terms of biological role, probable enzyme that may play an important role in cell wall biology. This is Putative L,D-transpeptidase YkuD (ykuD) from Bacillus subtilis (strain 168).